We begin with the raw amino-acid sequence, 165 residues long: Chorismate pyruvate-lyase (165 aa).

Substrate is bound by residues methionine 35, arginine 77, leucine 115, and glutamate 156.

Belongs to the UbiC family. In terms of assembly, monomer.

It is found in the cytoplasm. The enzyme catalyses chorismate = 4-hydroxybenzoate + pyruvate. It participates in cofactor biosynthesis; ubiquinone biosynthesis. Removes the pyruvyl group from chorismate, with concomitant aromatization of the ring, to provide 4-hydroxybenzoate (4HB) for the ubiquinone pathway. This is Chorismate pyruvate-lyase from Shigella boydii serotype 18 (strain CDC 3083-94 / BS512).